Consider the following 142-residue polypeptide: Large ribosomal subunit protein bL17 (142 aa).

This sequence belongs to the bacterial ribosomal protein bL17 family. In terms of assembly, part of the 50S ribosomal subunit. Contacts protein L32.

This is Large ribosomal subunit protein bL17 from Chlamydia muridarum (strain MoPn / Nigg).